We begin with the raw amino-acid sequence, 641 residues long: Probable licABCH operon regulator (641 aa).

2 consecutive PRD domains span residues 184–289 (ILPK…TQSQ) and 296–403 (SIEE…KKTE). A phosphohistidine; by HPr mark is found at H219, H278, H333, and H392. One can recognise a PTS EIIB type-2 domain in the interval 407–498 (KRCIIVCASG…ILSDEKEKAN (92 aa)). The residue at position 413 (C413) is a Phosphocysteine; by EIIA. Residues 499 to 638 (RYLKKELVFF…QELSDVFDQK (140 aa)) form the PTS EIIA type-2 domain. A Phosphohistidine; by EIIB modification is found at H559.

The protein belongs to the transcriptional antiterminator BglG family.

Its activity is regulated as follows. The regulatory activity of LicR is modulated by phosphorylation and dephosphorylation of the various LicR domains. It becomes activated via phosphoryl group transfer from PEP, EI and HPr on the two conserved histidine residues in the PRD 2 domain, whereas phosphorylation of the EIIA-like domain on His-559 by the PTS EIIB component LicB inactivates LicR. In terms of biological role, positive regulator of the licABCH operon. The chain is Probable licABCH operon regulator (licR) from Bacillus subtilis (strain 168).